The sequence spans 1835 residues: Protein TIC 214 (1835 aa).

The next 6 membrane-spanning stretches (helical) occupy residues 25–45 (VGLYYGFLTTFSIGPSYLFLL), 64–84 (FITGQLMMFISIYYAPLHLAL), 87–107 (PHTITVLVLPYLLFHFFWNNH), 124–144 (LSIQCVFLNNLIFQLFNHFIL), 172–192 (VGWLIGHIFFMKWVGLVLFWI), and 221–241 (IFSILLFITCVYYLGRIPSPI). Basic and acidic residues predominate over residues 246 to 258 (LKETSETEERGES). Disordered stretches follow at residues 246–304 (LKET…DGNQ), 735–759 (EFKTSDSEEKEAKEKEKTKEEKKEE), and 1535–1578 (NRNQ…KRQS). Acidic residues predominate over residues 259–268 (AEETDVEIET). A compositionally biased stretch (basic and acidic residues) spans 1553-1569 (PRNRQKDLEKDYAESDI).

This sequence belongs to the TIC214 family. As to quaternary structure, part of the Tic complex.

The protein resides in the plastid. It is found in the chloroplast inner membrane. Involved in protein precursor import into chloroplasts. May be part of an intermediate translocation complex acting as a protein-conducting channel at the inner envelope. The polypeptide is Protein TIC 214 (Liriodendron tulipifera (Tuliptree)).